Consider the following 215-residue polypeptide: Large ribosomal subunit protein bL25 (215 aa).

The span at 192–202 shows a compositional bias: acidic residues; it reads EEEEVEEEVAE. The segment at 192–215 is disordered; that stretch reads EEEEVEEEVAEPEVIKRKEEEEEE. The segment covering 204–215 has biased composition (basic and acidic residues); sequence EVIKRKEEEEEE.

Belongs to the bacterial ribosomal protein bL25 family. CTC subfamily. Part of the 50S ribosomal subunit; part of the 5S rRNA/L5/L18/L25 subcomplex. Contacts the 5S rRNA. Binds to the 5S rRNA independently of L5 and L18.

Functionally, this is one of the proteins that binds to the 5S RNA in the ribosome where it forms part of the central protuberance. The polypeptide is Large ribosomal subunit protein bL25 (Thermotoga neapolitana (strain ATCC 49049 / DSM 4359 / NBRC 107923 / NS-E)).